Consider the following 361-residue polypeptide: Histidinol-phosphate aminotransferase (361 aa).

K224 carries the post-translational modification N6-(pyridoxal phosphate)lysine.

Belongs to the class-II pyridoxal-phosphate-dependent aminotransferase family. Histidinol-phosphate aminotransferase subfamily. In terms of assembly, homodimer. Pyridoxal 5'-phosphate is required as a cofactor.

The catalysed reaction is L-histidinol phosphate + 2-oxoglutarate = 3-(imidazol-4-yl)-2-oxopropyl phosphate + L-glutamate. The protein operates within amino-acid biosynthesis; L-histidine biosynthesis; L-histidine from 5-phospho-alpha-D-ribose 1-diphosphate: step 7/9. This Limosilactobacillus fermentum (strain NBRC 3956 / LMG 18251) (Lactobacillus fermentum) protein is Histidinol-phosphate aminotransferase.